The following is a 116-amino-acid chain: Flagellar transcriptional regulator FlhD (116 aa).

The protein belongs to the FlhD family. Homodimer; disulfide-linked. Forms a heterohexamer composed of two FlhC and four FlhD subunits. Each FlhC binds a FlhD dimer, forming a heterotrimer, and a hexamer assembles by dimerization of two heterotrimers.

The protein localises to the cytoplasm. Its function is as follows. Functions in complex with FlhC as a master transcriptional regulator that regulates transcription of several flagellar and non-flagellar operons by binding to their promoter region. Activates expression of class 2 flagellar genes, including fliA, which is a flagellum-specific sigma factor that turns on the class 3 genes. Also regulates genes whose products function in a variety of physiological pathways. The chain is Flagellar transcriptional regulator FlhD from Enterobacter sp. (strain 22).